The sequence spans 320 residues: Histidine decarboxylase proenzyme (320 aa).

A propeptide spanning residues Asn2–Arg11 is cleaved from the precursor. At Ser98 the chain carries Pyruvic acid (Ser). Catalysis depends on Glu215, which acts as the Proton donor.

In terms of assembly, the proenzyme is a hexamer of identical pi chains; each pi chain monomer is cleaved to form a small (or beta) chain and a large (or alpha) chain by non-hydrolytic self-catalysis. Pyruvate is required as a cofactor.

It carries out the reaction L-histidine + H(+) = histamine + CO2. This chain is Histidine decarboxylase proenzyme (hdc), found in Clostridium perfringens (strain ATCC 13124 / DSM 756 / JCM 1290 / NCIMB 6125 / NCTC 8237 / Type A).